Consider the following 278-residue polypeptide: MGERFIKMHGLGNDFVVLDHLESPRELSPQEARFWADRRRGVGCDQVVQLLPGVEGGDAQMRIYNPDGSRAEMCGNAMRCVGLYLHEQRGMAAALAVETLAGIMRPQVTSALAITVDMGRPQWAGRAIPLDQDGEMIDAPLEVGGQSYRMTALSMGNPHGVVRVADAEGFELAKVGPLVEHHALFPNRINFEVVQVLSRSRIRMRVWERGAGITPACGTGACAAAVACMRQGWVERDCTVVLDGGELQIVWLESDRVMMSGPATEVFRGELVGLPAGF.

3 residues coordinate substrate: Asn-13, Gln-46, and Asn-65. Cys-74 acts as the Proton donor in catalysis. Substrate is bound by residues Gly-75–Asn-76, Asn-157, Asn-190, and Glu-208–Arg-209. Cys-217 (proton acceptor) is an active-site residue. Gly-218–Thr-219 contributes to the substrate binding site.

This sequence belongs to the diaminopimelate epimerase family. In terms of assembly, homodimer.

The protein resides in the cytoplasm. It catalyses the reaction (2S,6S)-2,6-diaminopimelate = meso-2,6-diaminopimelate. It functions in the pathway amino-acid biosynthesis; L-lysine biosynthesis via DAP pathway; DL-2,6-diaminopimelate from LL-2,6-diaminopimelate: step 1/1. In terms of biological role, catalyzes the stereoinversion of LL-2,6-diaminopimelate (L,L-DAP) to meso-diaminopimelate (meso-DAP), a precursor of L-lysine and an essential component of the bacterial peptidoglycan. This chain is Diaminopimelate epimerase, found in Magnetococcus marinus (strain ATCC BAA-1437 / JCM 17883 / MC-1).